Reading from the N-terminus, the 507-residue chain is Cytochrome P450 3A28 (507 aa).

C442 contributes to the heme binding site.

This sequence belongs to the cytochrome P450 family. The cofactor is heme.

It localises to the endoplasmic reticulum membrane. The protein localises to the microsome membrane. It carries out the reaction an organic molecule + reduced [NADPH--hemoprotein reductase] + O2 = an alcohol + oxidized [NADPH--hemoprotein reductase] + H2O + H(+). Functionally, cytochromes P450 are a group of heme-thiolate monooxygenases. In liver microsomes, this enzyme is involved in an NADPH-dependent electron transport pathway. It oxidizes a variety of structurally unrelated compounds, including steroids, fatty acids, and xenobiotics. The protein is Cytochrome P450 3A28 (CYP3A28) of Bos taurus (Bovine).